Consider the following 2113-residue polypeptide: MSVFRLGDHVWLDPPSSSKTGVAIGGIVKETKLGKTLIEDDEGKEHWVHAEDLSTLRPMHPNSAQGVDDMIRLGDLNEAGVVHNLLIRYQQHKIYTYTGSILVAVNPFQMLPLYTLEQVQIYYSRHMGELPPHIFAIANSCYFNMKKNKRDQCCIISGESGAGKTETTKLILQFLATVSGQHSWIEQQVLEANPILEAFGNAKTIRNDNSSRFGKYIDIHFNSSGVIEGASIEHFLLEKSRVCRQAPEERNYHIFYCMLMGMSPEEKQMLSLGMPSEYHYLTMGSCTSSEGLSDAKDYAHVRSAMKILQFSDSENWDISKLLAAILHLGNVGFMAAVFENLDSSDVMETPAFPLAMKLLEVQHQALRDCLIKHTIPVLGEFVSRPVNIAQATDRRDAFVKGIYGRLFQWIVKKINAAIFTPQAQDPQNVRRAIGLLDIFGFENFQNNSFEQLCINFANEHLQQFFVKHVFTMEQEEYLSENITWNYIHYTDNQPILDMLALKPMSIISLLDEESRFPQGTDVTMLQKLNSIHANNKSFLSPRSIHDTRFGIAHFAGDVYYQAEGFLEKNRDVLSTDILILIHSSKNKFLKEIFNVDSSQTKLGHGTICQVKAGSQLFKSSDSIKRPVTLASQFKQSLDQLMRILTNCQPYFVRCIKPNEYKKPLLFDRELCIQQLRYSGMMETVHIRKSGFPIRYTFDEFSQRFRVLLPSPERMQFQNKPRQMTLHIADLCLGTDKDWKVGKTKIFLKDHQDTVLEIRRSQALDGAAIRIQRVLRGHKYRKEFLRQRRAAVTLQAGWRGYSQRKNFKLILVGFERLQAIARSHLLMRQFQAMRQRIVQLQARCRGYLVRQQVQAKRRAVVIIQAHARGMVVRKSYWQQKSTGPQVILAKEPKAQVAVHERKRKSIYDTVTDTAMVEKVFGFLPAMIGGQEGPAPTRFEDLEVKTQKLHEVDLDTVPMMAMPEEEVDSLAEYTFPKFAVTYFQKSASHTHIQKPLRYPLLYHENDTDHSAALDVWIIILRFMGDLPEPVVYGRNSLTGSSVMRQIHDKLGKDSVTQHNRSSQVASQLNFGEEAFKFDGPISDRPMSNLEKVHFIVGYAIMRPGLRDEIYCQICKQLSENYKTSSRARGWILLSLCLGCFPPSERFMKYLLNFISQGPPSYGPFCAERLQRTFANGVRAEPPTWLELQAVKSKKHIPIQVILATGRSLTISVDSASTSREICQHVAQKQGLRDNLGFSLQVAVYDKFWSLGSGCDHLMDAVAQCEQLARERGESQRQAPWRIYFRKEFFTPWHDSQEDPVSTELIYHQVLRGVWSGEYNFEKEEELVELLARHCYVQLGATVKSNAVQELLPSCVPSKLYRTKSPEKWASLVTAAHAKAQYTQSKATPLAVREQTVEAARLLWPLLFSRLFEVTTLSGPRLPKTQLVLAINWKGMYFLDQKERTLLGLSFAEVMGLVANRDAPGGKKLLLATLQEEYEFVSPSSVAIAEMVALFLGGLKERSVFAMALQDRRATDDITLLPFKKGDLLILTKKQGLLASENWALGQNDRTGKTGLVPTACLYTIPSVTKPSTQLLSLLAMSPEKRKLAAQEVRALEPPLEDQLTESPYTLEEFSYQFFRAPEKETISRAAMPMARSRGHLWAYSPEPLRQPLLKSVHDKAKLRDAACQIFLAILKYTGDYPSRQSWHSLELTDQMFSLALQDPALQDELYCQILKQLTHNSIRFSEERAWQLLWLCTGLFPPGKTLLPHAQKFIDSRKKKPLALDCSRRLHRVLRVGPRKQPPHDVEVKAAEQNVSKLHHEVYLPNDTSKSMEVGSSSRVRDLCEGIGTRLQLASWDGCSLFIKITDKVISLKEGDFFFDSLRQVSDWVKKNRPQKEGASVTLPYQVFFMRKLWLNVTPGKDVNADTILHYHQELPKYLRGFHKCSREDAIHLGGLICKIQFGSDSSQLASVSKVLKELVPQNLTRLMSSEEWKKSLLLECDKNKRKTVAEAKVEFLKYMYRWPTFGSAFFEVKQTSEPSYPDILLIAINRHGLLLIHPKTKELLNTYPFTKISSWSSGNTYFHMALGSLGQGSRLLCETSLGYKMDDLLTSYVQQLLNTVNKQRGFRAPAPANP.

The Myosin motor domain maps to 65–760; it reads QGVDDMIRLG…QDTVLEIRRS (696 aa). 158 to 165 serves as a coordination point for ATP; the sequence is GESGAGKT. The segment at 637 to 659 is actin-binding; it reads LDQLMRILTNCQPYFVRCIKPNE. IQ domains are found at residues 745 to 765, 763 to 792, 786 to 815, 809 to 838, 832 to 861, and 855 to 884; these read IFLK…ALDG, LDGA…AAVT, QRRA…GFER, ILVG…RIVQ, MRQR…AVVI, and KRRA…TGPQ. S904 carries the phosphoserine modification. The mediates interaction with ANKS4B stretch occupies residues 962–1578; the sequence is EEEVDSLAEY…STQLLSLLAM (617 aa). The MyTH4 1 domain occupies 989–1189; it reads HIQKPLRYPL…PTWLELQAVK (201 aa). An FERM 1 domain is found at 1194–1503; it reads IPIQVILATG…GGLKERSVFA (310 aa). T1339 is modified (phosphothreonine). S1368 carries the post-translational modification Phosphoserine. The mediates interaction with CDHR2, CDHR5 and USH1C stretch occupies residues 1497–2113; that stretch reads KERSVFAMAL…GFRAPAPANP (617 aa). Residues 1498-1564 enclose the SH3 domain; it reads ERSVFAMALQ…PTACLYTIPS (67 aa). MyTH4 domains follow at residues 1641 to 1790 and 1790 to 1896; these read YSPE…KAAE and EQNV…LNVT. S1642 is subject to Phosphoserine. The FERM 2 domain occupies 1796 to 2099; sequence LHHEVYLPND…SYVQQLLNTV (304 aa).

This sequence belongs to the TRAFAC class myosin-kinesin ATPase superfamily. Myosin family. In terms of assembly, part of the IMAC/intermicrovillar adhesion complex/intermicrovillar tip-link complex composed of ANKS4B, MYO7B, USH1C, CDHR2 and CDHR5. Interacts with CDHR2. Interacts with CDHR5. Interacts with USH1C. Interacts with ANKS4B; requires initial interaction with USH1C. Interacts with CALML4; the interaction mediates the association of CALML4 with the IMAC/intermicrovillar adhesion complex. Expressed primarily in kidney and intestine. Detected in proximal tubule cells of the kidney and enterocytes of the intestine, specifically the distal tips of apical microvilli on these transporting epithelial cells (at protein level).

The protein resides in the cytoplasm. It localises to the cytoskeleton. It is found in the cell projection. Its subcellular location is the microvillus. Functionally, myosins are actin-based motor molecules with ATPase activity. Their highly divergent tails are presumed to bind to membranous compartments, which would be moved relative to actin filaments. As part of the intermicrovillar adhesion complex/IMAC plays a role in epithelial brush border differentiation, controlling microvilli organization and length. May link the complex to the actin core bundle of microvilli. The sequence is that of Unconventional myosin-VIIb (Myo7b) from Mus musculus (Mouse).